Here is a 244-residue protein sequence, read N- to C-terminus: 5-oxoprolinase subunit A (244 aa).

The protein belongs to the LamB/PxpA family. As to quaternary structure, forms a complex composed of PxpA, PxpB and PxpC.

The enzyme catalyses 5-oxo-L-proline + ATP + 2 H2O = L-glutamate + ADP + phosphate + H(+). Catalyzes the cleavage of 5-oxoproline to form L-glutamate coupled to the hydrolysis of ATP to ADP and inorganic phosphate. The sequence is that of 5-oxoprolinase subunit A from Salmonella paratyphi A (strain ATCC 9150 / SARB42).